Here is a 156-residue protein sequence, read N- to C-terminus: Small ribosomal subunit protein uS7 (156 aa).

This sequence belongs to the universal ribosomal protein uS7 family. Part of the 30S ribosomal subunit. Contacts proteins S9 and S11.

One of the primary rRNA binding proteins, it binds directly to 16S rRNA where it nucleates assembly of the head domain of the 30S subunit. Is located at the subunit interface close to the decoding center, probably blocks exit of the E-site tRNA. The polypeptide is Small ribosomal subunit protein uS7 (Rhizobium leguminosarum bv. trifolii (strain WSM2304)).